Here is a 146-residue protein sequence, read N- to C-terminus: NADH-ubiquinone oxidoreductase chain 6 (146 aa).

4 helical membrane-spanning segments follow: residues 10–30 (ILAI…LLFV), 43–63 (LMGI…FLFI), 81–101 (VIVL…PIAI), and 124–144 (APML…AIAM).

This sequence belongs to the complex I subunit 6 family.

The protein localises to the mitochondrion membrane. It carries out the reaction a ubiquinone + NADH + 5 H(+)(in) = a ubiquinol + NAD(+) + 4 H(+)(out). Its function is as follows. Core subunit of the mitochondrial membrane respiratory chain NADH dehydrogenase (Complex I) that is believed to belong to the minimal assembly required for catalysis. Complex I functions in the transfer of electrons from NADH to the respiratory chain. The immediate electron acceptor for the enzyme is believed to be ubiquinone. This Candida albicans (strain SC5314 / ATCC MYA-2876) (Yeast) protein is NADH-ubiquinone oxidoreductase chain 6 (NAD6).